Here is a 545-residue protein sequence, read N- to C-terminus: Labda-7,13-dienyl diphosphate synthase (545 aa).

Positions 315-320 (DADDTA) match the DXDDTA motif motif. Positions 444 to 450 (RRTDGSW) match the RXXDGSW motif motif. Residues 526 to 545 (LPAPAPVPPGFDAARTGPAD) are disordered.

Belongs to the terpene synthase family. Mg(2+) serves as cofactor.

The catalysed reaction is (2E,6E,10E)-geranylgeranyl diphosphate = (13E)-labda-7,13-dien-15-yl diphosphate. Functionally, involved in the biosynthesis of the labdane-type bicyclic diterpene labda-7,13(16),14-triene. Catalyzes the conversion of geranylgeranyl diphosphate (GGDP) into labda-7,13(E)-dienyl diphosphate. This Streptomyces clavuligerus protein is Labda-7,13-dienyl diphosphate synthase.